The primary structure comprises 377 residues: Probable protein phosphatase 2C 7 (377 aa).

Disordered regions lie at residues 1–68 and 80–99; these read MAAH…GKAA and TTVA…EDDE. The segment covering 21-39 has biased composition (low complexity); it reads PPAAEAEAAAAAAAIARAA. The span at 51 to 63 shows a compositional bias: basic residues; sequence GVRHPLKHRRFRA. Low complexity predominate over residues 80-89; that stretch reads TTVAEATATG. The PPM-type phosphatase domain maps to 115–361; the sequence is SCGYSSFRGR…DNITCIVVKF (247 aa). Asp151, Gly152, Asp313, and Asp352 together coordinate Mn(2+).

The protein belongs to the PP2C family. The cofactor is Mg(2+). It depends on Mn(2+) as a cofactor.

It catalyses the reaction O-phospho-L-seryl-[protein] + H2O = L-seryl-[protein] + phosphate. The enzyme catalyses O-phospho-L-threonyl-[protein] + H2O = L-threonyl-[protein] + phosphate. This Oryza sativa subsp. japonica (Rice) protein is Probable protein phosphatase 2C 7.